Here is a 959-residue protein sequence, read N- to C-terminus: Kinesin-like protein NACK1 (959 aa).

A disordered region spans residues 1–28 (MTVRTPGTPASKIDKTPATTPNGHRGRE). Positions 30–353 (KIVVTVRLRP…LYFATRAKEV (324 aa)) constitute a Kinesin motor domain. ATP is bound at residue 117 to 124 (GQTSSGKT). Threonine 145 carries the post-translational modification Phosphothreonine. Positions 362–429 (VVSDKQLVKH…LRRKLQEEQG (68 aa)) form a coiled coil. Disordered stretches follow at residues 417–438 (VDEL…SVSP), 451–473 (SPNL…GRQS), 598–640 (LPSN…FLKS), and 658–700 (NRAP…SVNM). Basic and acidic residues-rich tracts occupy residues 418 to 429 (DELRRKLQEEQG) and 454 to 466 (LEEK…ERTR). The stretch at 557-598 (KSVSANLKEEIARLHSQGSTIADLEEQLENVQKSLDKLVMSL) forms a coiled coil. A compositionally biased stretch (low complexity) spans 600–611 (SNNDQQSNNDTT). Positions 613–623 (KAKHPSKKKKL) are enriched in basic residues. Positions 630–640 (NSINRQNFLKS) are enriched in polar residues. Residues threonine 675 and threonine 690 each carry the phosphothreonine modification. Residues 685–756 (SSKEGTPYRR…EANEAAGYNL (72 aa)) are required for the binding to NPK1.

This sequence belongs to the TRAFAC class myosin-kinesin ATPase superfamily. Kinesin family. KIN-7 subfamily. In terms of assembly, interacts (via C-terminus) with NPK1 (via C-terminus). Post-translationally, phosphorylated at Thr-145, Thr-675 and Thr-690 by CDKAs and CDKBs. The phosphorylation occurs before metaphase and inhibits the interaction with NPK1 preventing the transition to cytokinesis.

It localises to the cytoplasm. It is found in the nucleus. Its subcellular location is the cytoskeleton. The protein localises to the phragmoplast. In terms of biological role, probable plus end-directed motor protein that functions in the NACK-PQR (NPK1-NQK1/MEK1-NRK1) MAP kinase signaling pathway, which is essential for somatic cell cytokinesis, especially for the cell-plate formation and its expansion. Regulates the activity and the localization of NPK1 by association through the non-catalytic region of the kinase. The protein is Kinesin-like protein NACK1 (NACK1) of Nicotiana tabacum (Common tobacco).